Consider the following 428-residue polypeptide: Enolase (428 aa).

Residue Gln-162 coordinates (2R)-2-phosphoglycerate. Residue Glu-204 is the Proton donor of the active site. 3 residues coordinate Mg(2+): Asp-241, Glu-282, and Asp-309. Residues Lys-334, Arg-363, Ser-364, and Lys-385 each coordinate (2R)-2-phosphoglycerate. The active-site Proton acceptor is the Lys-334.

The protein belongs to the enolase family. Requires Mg(2+) as cofactor.

It localises to the cytoplasm. The protein resides in the secreted. It is found in the cell surface. It catalyses the reaction (2R)-2-phosphoglycerate = phosphoenolpyruvate + H2O. Its pathway is carbohydrate degradation; glycolysis; pyruvate from D-glyceraldehyde 3-phosphate: step 4/5. Catalyzes the reversible conversion of 2-phosphoglycerate (2-PG) into phosphoenolpyruvate (PEP). It is essential for the degradation of carbohydrates via glycolysis. The protein is Enolase of Mycobacterium ulcerans (strain Agy99).